The sequence spans 320 residues: Polyadenylate-binding protein-interacting protein 13 (320 aa).

Residues 1-44 (MAVAENVGVKVDSSNNQNIDNNTTSLVETKPSCSDDQTPKSKSS) are disordered. Over residues 12–44 (DSSNNQNIDNNTTSLVETKPSCSDDQTPKSKSS) the composition is skewed to polar residues. Residues 65–75 (HLNPMAKEFVP) carry the PAM2-like motif. 2 RRM domains span residues 137–212 (RTVY…MSKT) and 234–310 (KTVY…PSKT).

The sequence is that of Polyadenylate-binding protein-interacting protein 13 (CID13) from Arabidopsis thaliana (Mouse-ear cress).